A 268-amino-acid polypeptide reads, in one-letter code: Protein MSS18 (268 aa).

It to baculovirus occlusion-derived virus envelope protein E27 (ODV-E27).

It is found in the mitochondrion. Functionally, involved in splicing of intron aI5-beta of the mitochondrial COX1 transcript. This is Protein MSS18 (MSS18) from Saccharomyces cerevisiae (strain ATCC 204508 / S288c) (Baker's yeast).